Reading from the N-terminus, the 456-residue chain is Phosphomethylpyrimidine synthase (456 aa).

Residues N80, M109, Y139, H175, S195 to G197, D236 to R239, and E275 contribute to the substrate site. H279 serves as a coordination point for Zn(2+). Y302 is a substrate binding site. H343 lines the Zn(2+) pocket. [4Fe-4S] cluster contacts are provided by C423, C426, and C431.

The protein belongs to the ThiC family. Requires [4Fe-4S] cluster as cofactor.

The enzyme catalyses 5-amino-1-(5-phospho-beta-D-ribosyl)imidazole + S-adenosyl-L-methionine = 4-amino-2-methyl-5-(phosphooxymethyl)pyrimidine + CO + 5'-deoxyadenosine + formate + L-methionine + 3 H(+). Its pathway is cofactor biosynthesis; thiamine diphosphate biosynthesis. Functionally, catalyzes the synthesis of the hydroxymethylpyrimidine phosphate (HMP-P) moiety of thiamine from aminoimidazole ribotide (AIR) in a radical S-adenosyl-L-methionine (SAM)-dependent reaction. In Prochlorococcus marinus (strain MIT 9301), this protein is Phosphomethylpyrimidine synthase.